The sequence spans 273 residues: Nucleotide-binding protein TT_C1664 (273 aa).

Position 8–15 (8–15) interacts with ATP; that stretch reads GLSGAGKT. 57-60 provides a ligand contact to GTP; sequence DARA.

Belongs to the RapZ-like family.

In terms of biological role, displays ATPase and GTPase activities. The chain is Nucleotide-binding protein TT_C1664 from Thermus thermophilus (strain ATCC BAA-163 / DSM 7039 / HB27).